Here is a 485-residue protein sequence, read N- to C-terminus: Glutamyl-tRNA(Gln) amidotransferase subunit A (485 aa).

Active-site charge relay system residues include Lys78 and Ser153. Ser177 (acyl-ester intermediate) is an active-site residue.

Belongs to the amidase family. GatA subfamily. In terms of assembly, heterotrimer of A, B and C subunits.

It catalyses the reaction L-glutamyl-tRNA(Gln) + L-glutamine + ATP + H2O = L-glutaminyl-tRNA(Gln) + L-glutamate + ADP + phosphate + H(+). Functionally, allows the formation of correctly charged Gln-tRNA(Gln) through the transamidation of misacylated Glu-tRNA(Gln) in organisms which lack glutaminyl-tRNA synthetase. The reaction takes place in the presence of glutamine and ATP through an activated gamma-phospho-Glu-tRNA(Gln). The sequence is that of Glutamyl-tRNA(Gln) amidotransferase subunit A from Lawsonia intracellularis (strain PHE/MN1-00).